We begin with the raw amino-acid sequence, 257 residues long: Fimbrial assembly protein, serogroup I (257 aa).

In Dichelobacter nodosus (Bacteroides nodosus), this protein is Fimbrial assembly protein, serogroup I (fimB).